Reading from the N-terminus, the 312-residue chain is Transcription initiation factor IIB-2 (312 aa).

The TFIIB-type zinc finger occupies 2-34 (SDAFCSDCKRHTEVVFDHSAGDTVCSECGLVLE). Zn(2+) contacts are provided by cysteine 6, cysteine 9, cysteine 26, and cysteine 29. A run of 2 repeats spans residues 115-192 (MADR…YIVK) and 216-290 (FCSN…DLYP).

Belongs to the TFIIB family. In terms of assembly, associates with TFIID-IIA (DA complex) to form TFIID-IIA-IIB (DAB-complex) which is then recognized by polymerase II.

The protein resides in the nucleus. Functionally, general factor that plays a major role in the activation of eukaryotic genes transcribed by RNA polymerase II. The chain is Transcription initiation factor IIB-2 (TFIIB2) from Arabidopsis thaliana (Mouse-ear cress).